The primary structure comprises 602 residues: Bifunctional lycopene cyclase/phytoene synthase (602 aa).

Residues 1–238 (MLTYMEVHLY…LVFASCATDR (238 aa)) form a lycopene beta-cyclase region. The next 7 helical transmembrane spans lie at 7–27 (VHLY…KPFF), 35–55 (YIFL…YIVY), 69–89 (VIGY…LITV), 110–130 (PVFQ…TIAA), 142–162 (PFYG…LWIG), 173–193 (AVLF…QYAI), and 211–231 (LPSL…VLVF). The tract at residues 245 to 602 (IYITPMNHNK…RGKSQAFTVI (358 aa)) is phytoene synthase.

This sequence in the N-terminal section; belongs to the lycopene beta-cyclase family. It in the C-terminal section; belongs to the phytoene/squalene synthase family.

It is found in the membrane. The catalysed reaction is all-trans-lycopene = gamma-carotene. It carries out the reaction gamma-carotene = all-trans-beta-carotene. It catalyses the reaction 2 (2E,6E,10E)-geranylgeranyl diphosphate = 15-cis-phytoene + 2 diphosphate. Its pathway is carotenoid biosynthesis; beta-carotene biosynthesis. It functions in the pathway carotenoid biosynthesis; phytoene biosynthesis; all-trans-phytoene from geranylgeranyl diphosphate: step 1/1. Bifunctional enzyme that catalyzes the reactions from geranylgeranyl diphosphate to phytoene (phytoene synthase) and lycopene to beta-carotene via the intermediate gamma-carotene (lycopene cyclase). The sequence is that of Bifunctional lycopene cyclase/phytoene synthase from Phycomyces blakesleeanus (strain ATCC 8743b / DSM 1359 / FGSC 10004 / NBRC 33097 / NRRL 1555).